The chain runs to 338 residues: Ketol-acid reductoisomerase (NADP(+)) (338 aa).

Residues 1-181 (MKVFYDKDAD…GGGRAGIIET (181 aa)) form the KARI N-terminal Rossmann domain. NADP(+) is bound by residues 24-27 (YGSQ), R47, and S52. H107 is a catalytic residue. G133 serves as a coordination point for NADP(+). Residues 182-327 (NFREETETDL…EKLRAMMPWI (146 aa)) form the KARI C-terminal knotted domain. Positions 190, 194, 226, and 230 each coordinate Mg(2+). S251 contacts substrate.

It belongs to the ketol-acid reductoisomerase family. It depends on Mg(2+) as a cofactor.

It carries out the reaction (2R)-2,3-dihydroxy-3-methylbutanoate + NADP(+) = (2S)-2-acetolactate + NADPH + H(+). The enzyme catalyses (2R,3R)-2,3-dihydroxy-3-methylpentanoate + NADP(+) = (S)-2-ethyl-2-hydroxy-3-oxobutanoate + NADPH + H(+). It participates in amino-acid biosynthesis; L-isoleucine biosynthesis; L-isoleucine from 2-oxobutanoate: step 2/4. It functions in the pathway amino-acid biosynthesis; L-valine biosynthesis; L-valine from pyruvate: step 2/4. Involved in the biosynthesis of branched-chain amino acids (BCAA). Catalyzes an alkyl-migration followed by a ketol-acid reduction of (S)-2-acetolactate (S2AL) to yield (R)-2,3-dihydroxy-isovalerate. In the isomerase reaction, S2AL is rearranged via a Mg-dependent methyl migration to produce 3-hydroxy-3-methyl-2-ketobutyrate (HMKB). In the reductase reaction, this 2-ketoacid undergoes a metal-dependent reduction by NADPH to yield (R)-2,3-dihydroxy-isovalerate. The protein is Ketol-acid reductoisomerase (NADP(+)) of Cupriavidus pinatubonensis (strain JMP 134 / LMG 1197) (Cupriavidus necator (strain JMP 134)).